Reading from the N-terminus, the 770-residue chain is Endothelin-converting enzyme 1 (770 aa).

Topologically, residues 1 to 68 (MRGVWPPPVS…WAARTQVEKR (68 aa)) are cytoplasmic. Thr25 carries the phosphothreonine modification. A helical; Signal-anchor for type II membrane protein transmembrane segment spans residues 69 to 89 (LVVLVVLLAAGLVACLAALGI). The Extracellular segment spans residues 90–770 (QYQTRSPSVC…MNPPHKCEVW (681 aa)). The Peptidase M13 domain maps to 98-770 (VCLSEACVSV…MNPPHKCEVW (673 aa)). 5 disulfides stabilise this stretch: Cys99/Cys104, Cys122/Cys755, Cys130/Cys715, Cys185/Cys435, and Cys644/Cys767. Residues Asn166, Asn187, Asn210, Asn270, Asn316, Asn362, Asn383, and Asn539 are each glycosylated (N-linked (GlcNAc...) asparagine). Zn(2+) is bound at residue His607. Residue Glu608 is part of the active site. A Zn(2+)-binding site is contributed by His611. N-linked (GlcNAc...) asparagine glycosylation is found at Asn632 and Asn651. Residue Glu667 coordinates Zn(2+). Residue Asp671 is the Proton donor of the active site.

Belongs to the peptidase M13 family. Homodimer; disulfide-linked. Interacts with PPP1R16B. Interacts with TSPAN8; this interaction recruits the endothelin converting enzyme ECE1 to tetraspanin-enriched microdomains and positively modulates its enzymatic activity. It depends on Zn(2+) as a cofactor. As to expression, all isoforms are expressed in umbilical vein endothelial cells, polynuclear neutrophils, fibroblasts, atrium cardiomyocytes and ventricles. Isoforms A, B and C are also expressed in placenta, lung, heart, adrenal gland and phaeochromocytoma; isoforms A and C in liver, testis and small intestine; isoform B, C and D in endothelial cells and umbilical vein smooth muscle cells; isoforms C and D in saphenous vein cells, and isoform C in kidney.

It localises to the cell membrane. It carries out the reaction Hydrolysis of the 21-Trp-|-Val-22 bond in big endothelin to form endothelin 1.. With respect to regulation, inhibited by phosphoramidon. Activated by K49-P1-20, a twenty-residue synthetic peptide shortened from the snake B.asper myotoxin II. In terms of biological role, converts big endothelin-1 to endothelin-1. The sequence is that of Endothelin-converting enzyme 1 (ECE1) from Homo sapiens (Human).